A 266-amino-acid polypeptide reads, in one-letter code: Flavin-dependent thymidylate synthase (266 aa).

In terms of domain architecture, ThyX spans 11–222 (GFIRLVDYMG…PLACASFERH (212 aa)). Residues Ser-57, 80-82 (RHR), and Glu-88 contribute to the FAD site. DUMP-binding positions include 77–80 (QWIR), 88–92 (EISGR), and Arg-161. Positions 80-90 (RHRTARLNEIS) match the ThyX motif motif. Residues 177–179 (DLH) and His-183 each bind FAD. Arg-188 provides a ligand contact to dUMP. The active-site Involved in ionization of N3 of dUMP, leading to its activation is Arg-188.

This sequence belongs to the thymidylate synthase ThyX family. In terms of assembly, homotetramer. It depends on FAD as a cofactor.

The catalysed reaction is dUMP + (6R)-5,10-methylene-5,6,7,8-tetrahydrofolate + NADPH + H(+) = dTMP + (6S)-5,6,7,8-tetrahydrofolate + NADP(+). It participates in pyrimidine metabolism; dTTP biosynthesis. In terms of biological role, catalyzes the reductive methylation of 2'-deoxyuridine-5'-monophosphate (dUMP) to 2'-deoxythymidine-5'-monophosphate (dTMP) while utilizing 5,10-methylenetetrahydrofolate (mTHF) as the methyl donor, and NADPH and FADH(2) as the reductant. The polypeptide is Flavin-dependent thymidylate synthase (Treponema denticola (strain ATCC 35405 / DSM 14222 / CIP 103919 / JCM 8153 / KCTC 15104)).